The chain runs to 514 residues: HTH-type transcriptional regulatory protein TyrR (514 aa).

The region spanning 2 to 72 (RLEVFCEDRL…GVTDVRTVPW (71 aa)) is the ACT domain. The PAS domain occupies 78-120 (EHLALSALLEALPEPVLSLDMKSKIEMANPASCQLFAHTQDRM). Residues 206–428 (IIAVSAKMKH…VKNAIYRALT (223 aa)) form the Sigma-54 factor interaction domain. ATP contacts are provided by residues 234-241 (GNTGTGKD) and 290-299 (ANGGSVLLDE). The H-T-H motif DNA-binding region spans 482 to 502 (STRKLAKRLGVSHTAIANKLR).

Homodimer. In presence of tyrosine (or high concentrations of phenylalanine or tryptophan) and ATP, it self-associates to form an hexamer.

Its subcellular location is the cytoplasm. Its function is as follows. Dual transcriptional regulator of the TyrR regulon, which includes a number of genes coding for proteins involved in the biosynthesis or transport of the three aromatic amino acids, phenylalanine, tyrosine and tryptophan. These three aromatic amino acids act as effectors which bind to the TyrR protein to form an active regulatory protein. Acts by binding specifically to TyrR boxes in the promoter region of the target genes. In Citrobacter braakii, this protein is HTH-type transcriptional regulatory protein TyrR.